The sequence spans 300 residues: Very-long-chain enoyl-CoA reductase (300 aa).

A helical transmembrane segment spans residues Ser-91–Leu-111. N-linked (GlcNAc...) asparagine glycosylation is present at Asn-163. A helical membrane pass occupies residues Val-191–Gln-211. An N-linked (GlcNAc...) asparagine glycan is attached at Asn-238. Residues Ile-243–Leu-263 traverse the membrane as a helical segment.

Belongs to the steroid 5-alpha reductase family.

It localises to the endoplasmic reticulum membrane. The enzyme catalyses a very-long-chain 2,3-saturated fatty acyl-CoA + NADP(+) = a very-long-chain (2E)-enoyl-CoA + NADPH + H(+). Its pathway is lipid metabolism; fatty acid biosynthesis. Functionally, catalyzes the last of the four reactions of the long-chain fatty acids elongation cycle. This endoplasmic reticulum-bound enzymatic process, allows the addition of 2 carbons to the chain of long- and very long-chain fatty acids/VLCFAs per cycle. This enzyme reduces the trans-2,3-enoyl-CoA fatty acid intermediate to an acyl-CoA that can be further elongated by entering a new cycle of elongation. Thereby, it participates in the production of VLCFAs of different chain lengths that are involved in multiple biological processes as precursors of membrane lipids and lipid mediators. This chain is Very-long-chain enoyl-CoA reductase (gpsn2), found in Dictyostelium discoideum (Social amoeba).